We begin with the raw amino-acid sequence, 430 residues long: Cysteate synthase (430 aa).

N6-(pyridoxal phosphate)lysine is present on K106. 2 residues coordinate pyridoxal 5'-phosphate: N132 and T381.

Belongs to the threonine synthase family. Cysteate synthase subfamily. Homotrimer. It depends on pyridoxal 5'-phosphate as a cofactor.

The catalysed reaction is O-phospho-L-serine + sulfite + H(+) = L-cysteate + phosphate. It functions in the pathway cofactor biosynthesis; coenzyme M biosynthesis. In terms of biological role, specifically catalyzes the beta-elimination of phosphate from L-phosphoserine and the beta-addition of sulfite to the dehydroalanine intermediate to produce L-cysteate. The polypeptide is Cysteate synthase (Methanoculleus marisnigri (strain ATCC 35101 / DSM 1498 / JR1)).